Consider the following 146-residue polypeptide: UPF0310 protein YdcG (146 aa).

It belongs to the UPF0310 family.

The polypeptide is UPF0310 protein YdcG (ydcG) (Bacillus subtilis (strain 168)).